The following is a 365-amino-acid chain: tRNA N6-adenosine threonylcarbamoyltransferase (365 aa).

Fe cation is bound by residues His-111 and His-115. Residues 140–144 (IVSGG), Asp-173, Gly-186, and Asn-298 each bind substrate. Fe cation is bound at residue Asp-323.

Belongs to the KAE1 / TsaD family. Fe(2+) serves as cofactor.

The protein resides in the cytoplasm. It catalyses the reaction L-threonylcarbamoyladenylate + adenosine(37) in tRNA = N(6)-L-threonylcarbamoyladenosine(37) in tRNA + AMP + H(+). Required for the formation of a threonylcarbamoyl group on adenosine at position 37 (t(6)A37) in tRNAs that read codons beginning with adenine. Is involved in the transfer of the threonylcarbamoyl moiety of threonylcarbamoyl-AMP (TC-AMP) to the N6 group of A37, together with TsaE and TsaB. TsaD likely plays a direct catalytic role in this reaction. The sequence is that of tRNA N6-adenosine threonylcarbamoyltransferase from Thermomicrobium roseum (strain ATCC 27502 / DSM 5159 / P-2).